Here is a 145-residue protein sequence, read N- to C-terminus: D-aminoacyl-tRNA deacylase (145 aa).

The Gly-cisPro motif, important for rejection of L-amino acids motif lies at 137–138; sequence GP.

The protein belongs to the DTD family. Homodimer.

It is found in the cytoplasm. It catalyses the reaction glycyl-tRNA(Ala) + H2O = tRNA(Ala) + glycine + H(+). The enzyme catalyses a D-aminoacyl-tRNA + H2O = a tRNA + a D-alpha-amino acid + H(+). An aminoacyl-tRNA editing enzyme that deacylates mischarged D-aminoacyl-tRNAs. Also deacylates mischarged glycyl-tRNA(Ala), protecting cells against glycine mischarging by AlaRS. Acts via tRNA-based rather than protein-based catalysis; rejects L-amino acids rather than detecting D-amino acids in the active site. By recycling D-aminoacyl-tRNA to D-amino acids and free tRNA molecules, this enzyme counteracts the toxicity associated with the formation of D-aminoacyl-tRNA entities in vivo and helps enforce protein L-homochirality. The sequence is that of D-aminoacyl-tRNA deacylase from Salmonella enteritidis PT4 (strain P125109).